A 146-amino-acid chain; its full sequence is D-aminoacyl-tRNA deacylase (146 aa).

The Gly-cisPro motif, important for rejection of L-amino acids signature appears at 138 to 139 (GP).

It belongs to the DTD family. As to quaternary structure, homodimer.

The protein resides in the cytoplasm. It catalyses the reaction glycyl-tRNA(Ala) + H2O = tRNA(Ala) + glycine + H(+). It carries out the reaction a D-aminoacyl-tRNA + H2O = a tRNA + a D-alpha-amino acid + H(+). Functionally, an aminoacyl-tRNA editing enzyme that deacylates mischarged D-aminoacyl-tRNAs. Also deacylates mischarged glycyl-tRNA(Ala), protecting cells against glycine mischarging by AlaRS. Acts via tRNA-based rather than protein-based catalysis; rejects L-amino acids rather than detecting D-amino acids in the active site. By recycling D-aminoacyl-tRNA to D-amino acids and free tRNA molecules, this enzyme counteracts the toxicity associated with the formation of D-aminoacyl-tRNA entities in vivo and helps enforce protein L-homochirality. The sequence is that of D-aminoacyl-tRNA deacylase from Stenotrophomonas maltophilia (strain K279a).